We begin with the raw amino-acid sequence, 270 residues long: Nodule lectin (270 aa).

Residues 1–33 (MAFYRTNLPTRELFSLVSVVIVLLATNINSVQA) form the signal peptide. Residues 34 to 41 (LSFNFTKL) constitute a propeptide that is removed on maturation. N-linked (GlcNAc...) asparagine glycosylation occurs at N134.

It belongs to the leguminous lectin family. Glycosylated in a boron-dependent manner. Glycosylation is required for localization to symbiosomes. 3 different glycosylation variants, NLEC-1A, NLEC-1B and NLEC-1C, have been identified. As to expression, expressed in nodules of Rhizobium-infected and uninfected roots and in the root stele near the nodule attachment point. In roots which have been colonized by the endomycorrhizal fungus G.versiforme, detected only in cortical cells colonized by the fungus, mainly those containing arbuscules.

It is found in the symbiosome. The protein resides in the peribacteroid space. The protein localises to the peribacteroid membrane. Involved in symbiosome development. The polypeptide is Nodule lectin (NLEC1) (Pisum sativum (Garden pea)).